A 301-amino-acid polypeptide reads, in one-letter code: D-alanine--D-alanine ligase A (301 aa).

Residues 96-290 (KKILRYEGVE…YSKLLDMIIE (195 aa)) form the ATP-grasp domain. Residue 123–178 (LDKLGFPLVVKPNSGGSSVGVKIVYNKNELISMLETVFEWDSEVVIEKYIKGDEIT) participates in ATP binding. Mg(2+) is bound by residues Asp-245, Glu-257, and Asn-259.

The protein belongs to the D-alanine--D-alanine ligase family. The cofactor is Mg(2+). Mn(2+) serves as cofactor.

It is found in the cytoplasm. The catalysed reaction is 2 D-alanine + ATP = D-alanyl-D-alanine + ADP + phosphate + H(+). Its pathway is cell wall biogenesis; peptidoglycan biosynthesis. Cell wall formation. This is D-alanine--D-alanine ligase A from Bacillus cereus (strain ATCC 14579 / DSM 31 / CCUG 7414 / JCM 2152 / NBRC 15305 / NCIMB 9373 / NCTC 2599 / NRRL B-3711).